Consider the following 445-residue polypeptide: 4-hydroxyphenylpyruvate dioxygenase (445 aa).

Polar residues predominate over residues Met-1–Asn-11. Residues Met-1–Ser-20 form a disordered region. 2 consecutive VOC domains span residues Arg-46–Tyr-192 and Arg-223–Lys-383. Fe cation-binding residues include His-226, His-308, and Glu-394.

This sequence belongs to the 4HPPD family. In terms of assembly, homodimer. Requires Fe cation as cofactor.

Its subcellular location is the cytoplasm. It carries out the reaction 3-(4-hydroxyphenyl)pyruvate + O2 = homogentisate + CO2. It functions in the pathway amino-acid degradation; L-phenylalanine degradation; acetoacetate and fumarate from L-phenylalanine: step 3/6. It participates in cofactor biosynthesis; prenylquinone biosynthesis. Functionally, catalyzes the conversion of 4-hydroxyphenylpyruvic acid to homogentisic acid, one of the steps in tyrosine catabolism. In Arabidopsis thaliana (Mouse-ear cress), this protein is 4-hydroxyphenylpyruvate dioxygenase (HPD).